Consider the following 361-residue polypeptide: sn-glycerol-3-phosphate import ATP-binding protein UgpC (361 aa).

The 232-residue stretch at 4-235 folds into the ABC transporter domain; sequence LSLKGIRKSY…PETVFVAGFI (232 aa). 37–44 contributes to the ATP binding site; the sequence is GPSGCGKS.

The protein belongs to the ABC transporter superfamily. sn-glycerol-3-phosphate importer (TC 3.A.1.1.3) family. As to quaternary structure, the complex is composed of two ATP-binding proteins (UgpC), two transmembrane proteins (UgpA and UgpE) and a solute-binding protein (UgpB).

It localises to the cell inner membrane. The enzyme catalyses sn-glycerol 3-phosphate(out) + ATP + H2O = sn-glycerol 3-phosphate(in) + ADP + phosphate + H(+). Part of the ABC transporter complex UgpBAEC involved in sn-glycerol-3-phosphate (G3P) import. Responsible for energy coupling to the transport system. The polypeptide is sn-glycerol-3-phosphate import ATP-binding protein UgpC (Burkholderia ambifaria (strain ATCC BAA-244 / DSM 16087 / CCUG 44356 / LMG 19182 / AMMD) (Burkholderia cepacia (strain AMMD))).